Reading from the N-terminus, the 193-residue chain is NAD(P)H-quinone oxidoreductase subunit J (193 aa).

The segment at 1–21 (MSDSAPTNPTPTNPAPEESAS) is disordered.

The protein belongs to the complex I 30 kDa subunit family. As to quaternary structure, NDH-1 can be composed of about 15 different subunits; different subcomplexes with different compositions have been identified which probably have different functions.

Its subcellular location is the cellular thylakoid membrane. The enzyme catalyses a plastoquinone + NADH + (n+1) H(+)(in) = a plastoquinol + NAD(+) + n H(+)(out). It carries out the reaction a plastoquinone + NADPH + (n+1) H(+)(in) = a plastoquinol + NADP(+) + n H(+)(out). In terms of biological role, NDH-1 shuttles electrons from an unknown electron donor, via FMN and iron-sulfur (Fe-S) centers, to quinones in the respiratory and/or the photosynthetic chain. The immediate electron acceptor for the enzyme in this species is believed to be plastoquinone. Couples the redox reaction to proton translocation, and thus conserves the redox energy in a proton gradient. Cyanobacterial NDH-1 also plays a role in inorganic carbon-concentration. The chain is NAD(P)H-quinone oxidoreductase subunit J from Synechococcus sp. (strain CC9902).